A 700-amino-acid chain; its full sequence is MRLGVCYFPEHWPSEEWERDVAAMADAGLEYVRMAEFSWGVLEPERGTFDFEWLDEAIELIGDHGMQAVLCTPTATPPKWLVDERPSIRQEDPDGTVREHGSRRHYCFNSDAYREETARIVERVTERYADSPHVAGWQTDNEFGCHETVRCYCDDCADAFRTWLADRYGDIDRLNEAWGNAFWSQQYGSFDEIDPPGPTPAEHHPSRLLAYARFSSDSVVEYNRLHADLIREADPDWFVTHNFMGRFPTLNAYDVSEDLDRVAWDSYPTGFVQDRYDGEASPDQLRAGDPDQVGMDHDIYRSALDRPFWVMEQQPGDVNWPPHCPQPGEGAMRLWAHHAAAHGADAVLYFRWRRCLEGQEQYHAGLRKADGSPDRGYADAAHTSEEFATLDGASHVDAPVAVVFDYDSLWALNAQPHAPDFDYWALQEAFYGAVRGRGVQVDVVPPSADLSGYAAVVAPALHLVTEDLADRLTDYIAGGGEVLFGPRTGVKDAENKLRPMSQPGPLTDLVGATVDQHESLPRRLETTVRRVGDPTDDSEEIAAPPVSFRTWAEWLDPDAAEPQYAYDVDGPADGRPAVVTNTVGDGQVTYCGVWPESDLADALASDLLDRAGVRYAERLPDGVRIGYRGGRTWVTNFTSDRLRLPEIDPESLAVDDTDRDGFDPMADDDKDSSADGIVVGPYGVAVIEGDCVDGLRIAQT.

A substrate-binding site is contributed by Arg103. Cys107 contacts Zn(2+). Asn141 lines the substrate pocket. Residue Glu142 is the Proton donor of the active site. Zn(2+) is bound by residues Cys151, Cys153, and Cys156. Glu312 functions as the Nucleophile in the catalytic mechanism. Substrate-binding positions include Trp320 and 360–363 (EQYH). Over residues 648-658 (DPESLAVDDTD) the composition is skewed to acidic residues. The disordered stretch occupies residues 648–674 (DPESLAVDDTDRDGFDPMADDDKDSSA).

This sequence belongs to the glycosyl hydrolase 42 family.

It catalyses the reaction Hydrolysis of terminal non-reducing beta-D-galactose residues in beta-D-galactosides.. Requires 4 M NaCl or KCl for maximal activity. Cleaves o-nitrophenyl-beta-D-galactopyranoside (ONPG) in vitro. This chain is Beta-galactosidase Bga, found in Halorubrum lacusprofundi (strain ATCC 49239 / DSM 5036 / JCM 8891 / ACAM 34).